The primary structure comprises 466 residues: Ribulose bisphosphate carboxylase large chain (466 aa).

Position 5 is an N6,N6,N6-trimethyllysine (Lys5). Residues Asn114 and Thr164 each coordinate substrate. The active-site Proton acceptor is the Lys166. Residue Lys168 participates in substrate binding. Mg(2+) contacts are provided by Lys192, Asp194, and Glu195. Lys192 is modified (N6-carboxylysine). His285 (proton acceptor) is an active-site residue. The substrate site is built by Arg286, His318, and Ser370.

The protein belongs to the RuBisCO large chain family. Type I subfamily. Heterohexadecamer of 8 large chains and 8 small chains; disulfide-linked. The disulfide link is formed within the large subunit homodimers. It depends on Mg(2+) as a cofactor. In terms of processing, the disulfide bond which can form in the large chain dimeric partners within the hexadecamer appears to be associated with oxidative stress and protein turnover.

The protein resides in the plastid. It localises to the chloroplast. It catalyses the reaction 2 (2R)-3-phosphoglycerate + 2 H(+) = D-ribulose 1,5-bisphosphate + CO2 + H2O. The enzyme catalyses D-ribulose 1,5-bisphosphate + O2 = 2-phosphoglycolate + (2R)-3-phosphoglycerate + 2 H(+). RuBisCO catalyzes two reactions: the carboxylation of D-ribulose 1,5-bisphosphate, the primary event in carbon dioxide fixation, as well as the oxidative fragmentation of the pentose substrate in the photorespiration process. Both reactions occur simultaneously and in competition at the same active site. This is Ribulose bisphosphate carboxylase large chain from Gonopterodendron arboreum (Maracaibo lignum-vitae).